We begin with the raw amino-acid sequence, 54 residues long: uncharacterized protein (54 aa).

This is an uncharacterized protein from Haemophilus influenzae (strain ATCC 51907 / DSM 11121 / KW20 / Rd).